Consider the following 159-residue polypeptide: Cyclic pyranopterin monophosphate synthase (159 aa).

Residues 75–77 (LCH) and 113–114 (ME) contribute to the substrate site. Aspartate 128 is an active-site residue.

The protein belongs to the MoaC family. As to quaternary structure, homohexamer; trimer of dimers.

The enzyme catalyses (8S)-3',8-cyclo-7,8-dihydroguanosine 5'-triphosphate = cyclic pyranopterin phosphate + diphosphate. The protein operates within cofactor biosynthesis; molybdopterin biosynthesis. In terms of biological role, catalyzes the conversion of (8S)-3',8-cyclo-7,8-dihydroguanosine 5'-triphosphate to cyclic pyranopterin monophosphate (cPMP). The protein is Cyclic pyranopterin monophosphate synthase of Cereibacter sphaeroides (strain ATCC 17029 / ATH 2.4.9) (Rhodobacter sphaeroides).